Here is a 334-residue protein sequence, read N- to C-terminus: Phosphoribosylformylglycinamidine cyclo-ligase (334 aa).

The protein belongs to the AIR synthase family.

It localises to the cytoplasm. It catalyses the reaction 2-formamido-N(1)-(5-O-phospho-beta-D-ribosyl)acetamidine + ATP = 5-amino-1-(5-phospho-beta-D-ribosyl)imidazole + ADP + phosphate + H(+). It functions in the pathway purine metabolism; IMP biosynthesis via de novo pathway; 5-amino-1-(5-phospho-D-ribosyl)imidazole from N(2)-formyl-N(1)-(5-phospho-D-ribosyl)glycinamide: step 2/2. The sequence is that of Phosphoribosylformylglycinamidine cyclo-ligase from Thermococcus gammatolerans (strain DSM 15229 / JCM 11827 / EJ3).